Reading from the N-terminus, the 544-residue chain is CTP synthase (544 aa).

The tract at residues Met1–Leu266 is amidoligase domain. Ser13 is a binding site for CTP. UTP is bound at residue Ser13. ATP contacts are provided by residues Ser14–Ile19 and Asp71. Mg(2+)-binding residues include Asp71 and Glu140. CTP-binding positions include Asp147 to Glu149, Lys187 to Gln192, and Lys223. Residues Lys187–Gln192 and Lys223 each bind UTP. Residues Thr291–Ala543 form the Glutamine amidotransferase type-1 domain. Gly354 provides a ligand contact to L-glutamine. Cys381 (nucleophile; for glutamine hydrolysis) is an active-site residue. L-glutamine is bound by residues Leu382–Gln385, Glu404, and Arg471. Active-site residues include His516 and Glu518.

It belongs to the CTP synthase family. Homotetramer.

It catalyses the reaction UTP + L-glutamine + ATP + H2O = CTP + L-glutamate + ADP + phosphate + 2 H(+). The enzyme catalyses L-glutamine + H2O = L-glutamate + NH4(+). It carries out the reaction UTP + NH4(+) + ATP = CTP + ADP + phosphate + 2 H(+). Its pathway is pyrimidine metabolism; CTP biosynthesis via de novo pathway; CTP from UDP: step 2/2. With respect to regulation, allosterically activated by GTP, when glutamine is the substrate; GTP has no effect on the reaction when ammonia is the substrate. The allosteric effector GTP functions by stabilizing the protein conformation that binds the tetrahedral intermediate(s) formed during glutamine hydrolysis. Inhibited by the product CTP, via allosteric rather than competitive inhibition. Its function is as follows. Catalyzes the ATP-dependent amination of UTP to CTP with either L-glutamine or ammonia as the source of nitrogen. Regulates intracellular CTP levels through interactions with the four ribonucleotide triphosphates. In Psychrobacter arcticus (strain DSM 17307 / VKM B-2377 / 273-4), this protein is CTP synthase.